The primary structure comprises 79 residues: Orally active insecticidal peptide (79 aa).

The first 19 residues, 1 to 19, serve as a signal peptide directing secretion; the sequence is MRVLFIIAGLALLSVVCYT. Positions 20 to 44 are excised as a propeptide; it reads SEMKERSSFNEVLSEFFAADEPQER. Intrachain disulfides connect Cys46/Cys61, Cys53/Cys66, and Cys60/Cys73. Alanine amide is present on Ala77.

This sequence belongs to the neurotoxin 03 (Tx2) family. 01 subfamily. In terms of tissue distribution, expressed by the venom gland.

It is found in the secreted. Probable ion channel inhibitor. Shows insecticidal activity when injected into mealworms. This Selenotypus plumipes (Australian featherleg tarantula) protein is Orally active insecticidal peptide.